We begin with the raw amino-acid sequence, 262 residues long: Small ribosomal subunit protein uS2 (262 aa).

The tract at residues 225–262 (KQGEQLTEEAKPEDKEDEKGQAEEKEVKEENNSANKEE) is disordered. Basic and acidic residues predominate over residues 232 to 262 (EEAKPEDKEDEKGQAEEKEVKEENNSANKEE).

It belongs to the universal ribosomal protein uS2 family.

The polypeptide is Small ribosomal subunit protein uS2 (Halothermothrix orenii (strain H 168 / OCM 544 / DSM 9562)).